A 208-amino-acid polypeptide reads, in one-letter code: Ribosomal RNA small subunit methyltransferase G (208 aa).

S-adenosyl-L-methionine contacts are provided by residues G76, L81, 127 to 128, and R142; that span reads VE.

It belongs to the methyltransferase superfamily. RNA methyltransferase RsmG family.

Its subcellular location is the cytoplasm. It catalyses the reaction guanosine(527) in 16S rRNA + S-adenosyl-L-methionine = N(7)-methylguanosine(527) in 16S rRNA + S-adenosyl-L-homocysteine. Functionally, specifically methylates the N7 position of guanine in position 527 of 16S rRNA. The polypeptide is Ribosomal RNA small subunit methyltransferase G (Legionella pneumophila (strain Lens)).